A 369-amino-acid polypeptide reads, in one-letter code: Phospho-N-acetylmuramoyl-pentapeptide-transferase (369 aa).

10 consecutive transmembrane segments (helical) span residues 2-22 (IALL…TPLF), 55-75 (TVVV…MWMM), 86-106 (GLLL…DDFI), 120-140 (AKLI…LQFP), 163-183 (LAFG…NLII), 196-216 (LDGL…IMGI), 239-259 (PMDL…FLWW), 266-286 (IFMG…FAIL), 291-311 (LLLA…IIQV), and 348-368 (ILAG…WVVL).

This sequence belongs to the glycosyltransferase 4 family. MraY subfamily. The cofactor is Mg(2+).

The protein localises to the cell membrane. It catalyses the reaction UDP-N-acetyl-alpha-D-muramoyl-L-alanyl-gamma-D-glutamyl-meso-2,6-diaminopimeloyl-D-alanyl-D-alanine + di-trans,octa-cis-undecaprenyl phosphate = di-trans,octa-cis-undecaprenyl diphospho-N-acetyl-alpha-D-muramoyl-L-alanyl-D-glutamyl-meso-2,6-diaminopimeloyl-D-alanyl-D-alanine + UMP. It participates in cell wall biogenesis; peptidoglycan biosynthesis. In terms of biological role, catalyzes the initial step of the lipid cycle reactions in the biosynthesis of the cell wall peptidoglycan: transfers peptidoglycan precursor phospho-MurNAc-pentapeptide from UDP-MurNAc-pentapeptide onto the lipid carrier undecaprenyl phosphate, yielding undecaprenyl-pyrophosphoryl-MurNAc-pentapeptide, known as lipid I. In Paenarthrobacter aurescens (strain TC1), this protein is Phospho-N-acetylmuramoyl-pentapeptide-transferase.